Here is a 319-residue protein sequence, read N- to C-terminus: tRNA uridine(34) hydroxylase (319 aa).

One can recognise a Rhodanese domain in the interval 127-221 (KQEDTVIIDA…YGKDPEVQGE (95 aa)). The active-site Cysteine persulfide intermediate is the C181.

This sequence belongs to the TrhO family.

It catalyses the reaction uridine(34) in tRNA + AH2 + O2 = 5-hydroxyuridine(34) in tRNA + A + H2O. In terms of biological role, catalyzes oxygen-dependent 5-hydroxyuridine (ho5U) modification at position 34 in tRNAs. The polypeptide is tRNA uridine(34) hydroxylase (Bacillus anthracis (strain A0248)).